Reading from the N-terminus, the 504-residue chain is MAKIDFRNKINWRRRFRSPPRVETERDILRIFESDRGRIVNSPAIRRLQQKTQVFPLERNAAVRTRLTHSLEVQQVGRYIAKEVLSRLKELRLLEEYGLEELTGPFESVVEMACLMHDIGNPPFGHFGEAAINDWFRQRLAPGDALGQPLTDDRCEVQALRLHDGETSLNALRRKVRQDLCSFEGNAQGIRLVHTLMRMNLTWAQVGCILKYTRPAWWSEETPASHSYLMKKPGYYLAEEEYVARLRKELDLAPYNRFPLTWIMEAADDISYCVADLEDAVEKRIFSAEQLYQHLYDAWGSHEKGSLFSQVVENAWEKSRANYLKQSAEDQFFMYLRVNTLNKLVPYAARRFIDNLPAIFTGDFNHALLEDDSDCSQLLELYKNVAMKQVFSHPDVEQLELQGYRVISGLLDIYQPLLKLSLEDFSELVAQERVRRLPIASRLYQKLSTRHRLAYVEAVNKLARTAPEFALMEYYYRCRLIQDYISGMTDLYAWDEYRRLMAVE.

Positions 66-273 (RLTHSLEVQQ…MEAADDISYC (208 aa)) constitute an HD domain.

It belongs to the dGTPase family. Type 1 subfamily. As to quaternary structure, homotetramer. The cofactor is Mg(2+).

The enzyme catalyses dGTP + H2O = 2'-deoxyguanosine + triphosphate + H(+). Functionally, dGTPase preferentially hydrolyzes dGTP over the other canonical NTPs. The protein is Deoxyguanosinetriphosphate triphosphohydrolase of Klebsiella pneumoniae subsp. pneumoniae (strain ATCC 700721 / MGH 78578).